The chain runs to 421 residues: SH2 domain-containing protein 4A (421 aa).

Serine 117 and serine 123 each carry phosphoserine. The tract at residues 132 to 271 (DLQAMKKTEP…FLQPLGIPPK (140 aa)) is disordered. 2 stretches are compositionally biased toward basic and acidic residues: residues 163 to 201 (TRKDDKAQTKPVKEKDHEEMKQTEDEKTKQIYKSWKEDS) and 211 to 230 (KAADEKRRSLAKQAREDYKR). A Phosphoserine modification is found at serine 232. One can recognise an SH2 domain in the interval 315 to 407 (WFHGILTLKK…LGKELLLYPC (93 aa)).

Interacts with ESR1. In terms of tissue distribution, in the kidney, expressed only in the glomerulus. Expressed in T-cells, B-cells, macrophages and dendritic cells (at protein level). In adult, highest levels are found in muscle and lung with lower levels in kidney.

The protein localises to the cytoplasm. Inhibits estrogen-induced cell proliferation by competing with PLCG for binding to ESR1, blocking the effect of estrogen on PLCG and repressing estrogen-induced proliferation. May play a role in T-cell development and function. This Mus musculus (Mouse) protein is SH2 domain-containing protein 4A (Sh2d4a).